We begin with the raw amino-acid sequence, 348 residues long: uncharacterized protein (348 aa).

The protein localises to the virion. This is an uncharacterized protein from Acanthamoeba polyphaga mimivirus (APMV).